An 880-amino-acid chain; its full sequence is Alanine--tRNA ligase (880 aa).

Zn(2+) is bound by residues His-567, His-571, Cys-669, and His-673.

Belongs to the class-II aminoacyl-tRNA synthetase family. Zn(2+) serves as cofactor.

The protein localises to the cytoplasm. The enzyme catalyses tRNA(Ala) + L-alanine + ATP = L-alanyl-tRNA(Ala) + AMP + diphosphate. Functionally, catalyzes the attachment of alanine to tRNA(Ala) in a two-step reaction: alanine is first activated by ATP to form Ala-AMP and then transferred to the acceptor end of tRNA(Ala). Also edits incorrectly charged Ser-tRNA(Ala) and Gly-tRNA(Ala) via its editing domain. This is Alanine--tRNA ligase from Bacillus cereus (strain ATCC 14579 / DSM 31 / CCUG 7414 / JCM 2152 / NBRC 15305 / NCIMB 9373 / NCTC 2599 / NRRL B-3711).